The primary structure comprises 423 residues: Gamma-glutamyl phosphate reductase (423 aa).

The span at 1 to 14 shows a compositional bias: low complexity; sequence MTLQAAPRSAAAQQ. The tract at residues 1 to 25 is disordered; that stretch reads MTLQAAPRSAAAQQREPDLRQEVHD. Basic and acidic residues predominate over residues 15–25; it reads REPDLRQEVHD.

The protein belongs to the gamma-glutamyl phosphate reductase family.

The protein localises to the cytoplasm. The catalysed reaction is L-glutamate 5-semialdehyde + phosphate + NADP(+) = L-glutamyl 5-phosphate + NADPH + H(+). It participates in amino-acid biosynthesis; L-proline biosynthesis; L-glutamate 5-semialdehyde from L-glutamate: step 2/2. In terms of biological role, catalyzes the NADPH-dependent reduction of L-glutamate 5-phosphate into L-glutamate 5-semialdehyde and phosphate. The product spontaneously undergoes cyclization to form 1-pyrroline-5-carboxylate. The protein is Gamma-glutamyl phosphate reductase of Mycobacterium marinum (strain ATCC BAA-535 / M).